The sequence spans 253 residues: 3-deoxy-manno-octulosonate cytidylyltransferase (253 aa).

This sequence belongs to the KdsB family.

It is found in the cytoplasm. It catalyses the reaction 3-deoxy-alpha-D-manno-oct-2-ulosonate + CTP = CMP-3-deoxy-beta-D-manno-octulosonate + diphosphate. Its pathway is nucleotide-sugar biosynthesis; CMP-3-deoxy-D-manno-octulosonate biosynthesis; CMP-3-deoxy-D-manno-octulosonate from 3-deoxy-D-manno-octulosonate and CTP: step 1/1. It functions in the pathway bacterial outer membrane biogenesis; lipopolysaccharide biosynthesis. Activates KDO (a required 8-carbon sugar) for incorporation into bacterial lipopolysaccharide in Gram-negative bacteria. The sequence is that of 3-deoxy-manno-octulosonate cytidylyltransferase from Acinetobacter baumannii (strain SDF).